Consider the following 398-residue polypeptide: Nonsense-mediated decay protein 4 (398 aa).

Residues 327–355 (PVTSNYRGKNNRGRNNRGRRGNKRRERER) are disordered. Basic residues predominate over residues 335 to 350 (KNNRGRNNRGRRGNKR).

It localises to the cytoplasm. Functionally, involved in nonsense-mediated decay of mRNAs containing premature stop codons. The protein is Nonsense-mediated decay protein 4 (NMD4) of Candida albicans (strain SC5314 / ATCC MYA-2876) (Yeast).